The chain runs to 375 residues: Nucleosome assembly protein 1-like 4 (375 aa).

Residues 1-31 (MADHSFSDGVPSDSVEAAKNASNTEKLTDQV) are disordered. Ala2 carries the N-acetylalanine modification. A phosphoserine mark is found at Ser5, Ser7, and Ser12. Residues 20–31 (NASNTEKLTDQV) are compositionally biased toward polar residues. Thr51 carries the post-translational modification Phosphothreonine. Ser53 and Ser54 each carry phosphoserine. Thr58 bears the Phosphothreonine mark. Lys105 bears the N6-acetyllysine mark. Residues 116–137 (PTDAESEWHSENEEEEKLAGDM) form a disordered region. Residues 121–137 (SEWHSENEEEEKLAGDM) show a composition bias toward basic and acidic residues. A Phosphoserine modification is found at Ser125. Lys146 carries the post-translational modification N6-acetyllysine. A Nuclear localization signal motif is present at residues 265–271 (IKKKQKH). Ser304 is subject to Phosphoserine. Residues 339 to 375 (AIEDDDNFEEGEEGEEEELEGDEEGEDEDDAEINPKV) form a disordered region.

The protein belongs to the nucleosome assembly protein (NAP) family. Interacts with core (H2A, CD2APH2B, H3, H4) and linker (H1) histones. In terms of assembly, (Microbial infection) Interacts with Chikungunya virus non-structural protein 3 (via C-terminus). In terms of processing, phosphorylated at the G0/G1 boundary but it is not phosphorylated in S-phase. Phosphorylated protein remains in the cytoplasm in a complex with histones during the G0/G1 transition, whereas dephosphorylation triggers its transport into the nucleus at the G1/S-boundary. Polyglutamylated by TTLL4, a modification that occurs exclusively on glutamate residues and results in polyglutamate chains on the gamma-carboxyl group. Some residues may also be monoglycylated but not polyglycylated due to the absence of functional TTLL10 in human. Ubiquitous. Biallelically expressed in fetal and adult tissues. Highest levels in testis.

The protein resides in the nucleus. It is found in the cytoplasm. Acts as a histone chaperone in nucleosome assembly. This is Nucleosome assembly protein 1-like 4 from Homo sapiens (Human).